We begin with the raw amino-acid sequence, 595 residues long: NADH-quinone oxidoreductase subunit C/D (595 aa).

Residues 1–185 (MNKNICLSAS…NPFVLTKEKE (185 aa)) are NADH dehydrogenase I subunit C. Positions 209 to 595 (DFMFLNFGPN…IDFVMSDVDR (387 aa)) are NADH dehydrogenase I subunit D.

In the N-terminal section; belongs to the complex I 30 kDa subunit family. This sequence in the C-terminal section; belongs to the complex I 49 kDa subunit family. NDH-1 is composed of 13 different subunits. Subunits NuoB, CD, E, F, and G constitute the peripheral sector of the complex.

It localises to the cell inner membrane. It catalyses the reaction a quinone + NADH + 5 H(+)(in) = a quinol + NAD(+) + 4 H(+)(out). Functionally, NDH-1 shuttles electrons from NADH, via FMN and iron-sulfur (Fe-S) centers, to quinones in the respiratory chain. The immediate electron acceptor for the enzyme in this species is believed to be ubiquinone. Couples the redox reaction to proton translocation (for every two electrons transferred, four hydrogen ions are translocated across the cytoplasmic membrane), and thus conserves the redox energy in a proton gradient. This is NADH-quinone oxidoreductase subunit C/D from Baumannia cicadellinicola subsp. Homalodisca coagulata.